The chain runs to 339 residues: Phosphate acyltransferase (339 aa).

The protein belongs to the PlsX family. In terms of assembly, homodimer. Probably interacts with PlsY.

It is found in the cytoplasm. The catalysed reaction is a fatty acyl-[ACP] + phosphate = an acyl phosphate + holo-[ACP]. The protein operates within lipid metabolism; phospholipid metabolism. Catalyzes the reversible formation of acyl-phosphate (acyl-PO(4)) from acyl-[acyl-carrier-protein] (acyl-ACP). This enzyme utilizes acyl-ACP as fatty acyl donor, but not acyl-CoA. The sequence is that of Phosphate acyltransferase from Helicobacter acinonychis (strain Sheeba).